A 1471-amino-acid chain; its full sequence is ABC multidrug transporter F (1471 aa).

The span at 1-19 shows a compositional bias: polar residues; it reads MALNSTDNRWSTGEDTPSE. The disordered stretch occupies residues 1-40; it reads MALNSTDNRWSTGEDTPSEAQLPDGEERLDAAPDEKVTAE. Residue asparagine 4 is glycosylated (N-linked (GlcNAc...) asparagine). Residues 25–40 are compositionally biased toward basic and acidic residues; the sequence is GEERLDAAPDEKVTAE. N-linked (GlcNAc...) asparagine glycosylation is found at asparagine 71 and asparagine 311. The 255-residue stretch at 133–387 folds into the ABC transporter 1 domain; that stretch reads LKVPTMVRQA…FEQLGFQCPE (255 aa). A helical transmembrane segment spans residues 498–518; that stretch reads VTLAMLIGNFFEALIIASIFY. Residue asparagine 519 is glycosylated (N-linked (GlcNAc...) asparagine). Helical transmembrane passes span 532 to 552, 578 to 598, 607 to 627, 641 to 661, and 751 to 771; these read ALLFMMVLLNAFASVLEILTL, FIMSLPYKFVNSSLVNLTLYF, GPFFFFLLISTSMMLAMSMFF, LAPSSIILLALVLYTGFTIPV, and IIIAMTVFLAVCHFVTTELVA. The disordered stretch occupies residues 791 to 819; sequence RAKQGQRDEEQPSASAVPSEKYSEAPTPV. One can recognise an ABC transporter 2 domain in the interval 829 to 1071; that stretch reads FHWEDVCYDV…TLMDYFVRNG (243 aa). Asparagine 842 carries an N-linked (GlcNAc...) asparagine glycan. Residue 865–872 participates in ATP binding; sequence GVSGAGKT. 5 helical membrane-spanning segments follow: residues 1167 to 1187, 1201 to 1221, 1252 to 1272, 1288 to 1308, and 1326 to 1346; these read YLYSKAILTVGSSIFIGFSFF, FGVFVFLFVVIQLIFQIIPTF, FAWNTIAAVLCFLAWFYPVGL, LVFLIIWATFLFASSFAHLLI, and IMMYAFCGILAGPHALPGFWI. N-linked (GlcNAc...) asparagine glycans are attached at residues asparagine 1386, asparagine 1422, and asparagine 1429. Residues 1441–1461 form a helical membrane-spanning segment; sequence FGLLWVYVAVNTFGAVFLYWL.

Belongs to the ABC transporter superfamily. ABCG family. PDR (TC 3.A.1.205) subfamily.

It localises to the cell membrane. It catalyses the reaction fluconazole(in) + ATP + H2O = fluconazole(out) + ADP + phosphate + H(+). It carries out the reaction itraconazole(in) + ATP + H2O = itraconazole(out) + ADP + phosphate + H(+). The efflux inhibitor FK506 impairs the transport activity. Functionally, pleiotropic ABC efflux transporter that shows a strong substrate specificity for the azole class of drugs such as lotrimazole (CLT), fluconazole (FLC), itraconazole (ITC), ketoconazole (KTC), posaconazole (POS), econazole (ECON), metconazole (MET), miconazole (MCZ), prochloraz (PCLZ), and tebuconazole (TEBZ). The sequence is that of ABC multidrug transporter F from Aspergillus fumigatus (strain ATCC MYA-4609 / CBS 101355 / FGSC A1100 / Af293) (Neosartorya fumigata).